A 144-amino-acid chain; its full sequence is Small ribosomal subunit protein uS11 (144 aa).

Residues 123–144 (EDVTPVPTDSTRRKGSRRGRRL) are disordered. Positions 135–144 (RKGSRRGRRL) are enriched in basic residues.

It belongs to the universal ribosomal protein uS11 family.

The sequence is that of Small ribosomal subunit protein uS11 (RPS14) from Trypanosoma brucei brucei.